Here is a 768-residue protein sequence, read N- to C-terminus: Polyadenylate-binding protein, cytoplasmic and nuclear (768 aa).

Residues 1–11 are compositionally biased toward polar residues; that stretch reads MSAETATNPPV. The interval 1–52 is disordered; sequence MSAETATNPPVDTTPGAAPESATNGSNANVAADTTAGEASQTTSSTTPTAQP. A compositionally biased stretch (low complexity) spans 39 to 52; sequence ASQTTSSTTPTAQP. 4 consecutive RRM domains span residues 55-133, 143-220, 236-314, and 340-470; these read ASLY…WSQR, GNVF…HHIA, TNVY…RAQK, and VNLY…LAQR. Disordered stretches follow at residues 374–428, 633–662, and 739–768; these read DFAP…EKKP, QQGM…NASP, and KNKG…ETKS. Residues 637–646 are compositionally biased toward gly residues; sequence GRPGQAGRGQ. Positions 662–739 constitute a PABC domain; sequence PNGLTLQVLN…ALTVYDEYVK (78 aa). Positions 753–768 are enriched in basic and acidic residues; it reads NKSKDASQETAEETKS.

The protein belongs to the polyadenylate-binding protein type-1 family.

It localises to the cytoplasm. It is found in the nucleus. Its function is as follows. Binds the poly(A) tail of mRNA. Appears to be an important mediator of the multiple roles of the poly(A) tail in mRNA biogenesis, stability and translation. In the nucleus, involved in both mRNA cleavage and polyadenylation. Is also required for efficient mRNA export to the cytoplasm. Acts in concert with a poly(A)-specific nuclease (PAN) to affect poly(A) tail shortening, which may occur concomitantly with either nucleocytoplasmic mRNA transport or translational initiation. In the cytoplasm, stimulates translation initiation and regulates mRNA decay through translation termination-coupled poly(A) shortening, probably mediated by PAN. The sequence is that of Polyadenylate-binding protein, cytoplasmic and nuclear (PAB1) from Coccidioides immitis (strain RS) (Valley fever fungus).